The primary structure comprises 715 residues: Polyribonucleotide nucleotidyltransferase (715 aa).

Residues aspartate 491 and aspartate 497 each coordinate Mg(2+). The KH domain occupies 558–617 (PKIMTMTINPEKIRDVIGPQGRVINKIIEETGVKIDIEQDGRVFIASINHEANLRAKQII). The region spanning 627-695 (GQVYLGTVKR…DQGRVNLSRK (69 aa)) is the S1 motif domain.

It belongs to the polyribonucleotide nucleotidyltransferase family. It depends on Mg(2+) as a cofactor.

It is found in the cytoplasm. The enzyme catalyses RNA(n+1) + phosphate = RNA(n) + a ribonucleoside 5'-diphosphate. Functionally, involved in mRNA degradation. Catalyzes the phosphorolysis of single-stranded polyribonucleotides processively in the 3'- to 5'-direction. The protein is Polyribonucleotide nucleotidyltransferase of Brevibacillus brevis (strain 47 / JCM 6285 / NBRC 100599).